We begin with the raw amino-acid sequence, 424 residues long: Serine--tRNA ligase (424 aa).

233-235 contributes to the L-serine binding site; that stretch reads TAE. Residue 264 to 266 coordinates ATP; sequence RRE. Position 287 (glutamate 287) interacts with L-serine. Position 351-354 (351-354) interacts with ATP; that stretch reads EISS. Residue serine 387 participates in L-serine binding.

Belongs to the class-II aminoacyl-tRNA synthetase family. Type-1 seryl-tRNA synthetase subfamily. As to quaternary structure, homodimer. The tRNA molecule binds across the dimer.

It localises to the cytoplasm. It carries out the reaction tRNA(Ser) + L-serine + ATP = L-seryl-tRNA(Ser) + AMP + diphosphate + H(+). It catalyses the reaction tRNA(Sec) + L-serine + ATP = L-seryl-tRNA(Sec) + AMP + diphosphate + H(+). The protein operates within aminoacyl-tRNA biosynthesis; selenocysteinyl-tRNA(Sec) biosynthesis; L-seryl-tRNA(Sec) from L-serine and tRNA(Sec): step 1/1. Its function is as follows. Catalyzes the attachment of serine to tRNA(Ser). Is also able to aminoacylate tRNA(Sec) with serine, to form the misacylated tRNA L-seryl-tRNA(Sec), which will be further converted into selenocysteinyl-tRNA(Sec). This is Serine--tRNA ligase from Cyanothece sp. (strain PCC 7425 / ATCC 29141).